Here is a 354-residue protein sequence, read N- to C-terminus: Uroporphyrinogen decarboxylase (354 aa).

Substrate-binding positions include 30–34, Phe-49, Asp-79, Tyr-156, Ser-211, and His-326; that span reads RQAGR.

It belongs to the uroporphyrinogen decarboxylase family. In terms of assembly, homodimer.

The protein resides in the cytoplasm. The enzyme catalyses uroporphyrinogen III + 4 H(+) = coproporphyrinogen III + 4 CO2. It participates in porphyrin-containing compound metabolism; protoporphyrin-IX biosynthesis; coproporphyrinogen-III from 5-aminolevulinate: step 4/4. Catalyzes the decarboxylation of four acetate groups of uroporphyrinogen-III to yield coproporphyrinogen-III. This Salinibacter ruber (strain DSM 13855 / M31) protein is Uroporphyrinogen decarboxylase.